The following is a 467-amino-acid chain: tRNA(Ile)-lysidine synthase (467 aa).

26 to 31 (SGGPDS) provides a ligand contact to ATP.

The protein belongs to the tRNA(Ile)-lysidine synthase family.

It is found in the cytoplasm. The catalysed reaction is cytidine(34) in tRNA(Ile2) + L-lysine + ATP = lysidine(34) in tRNA(Ile2) + AMP + diphosphate + H(+). Functionally, ligates lysine onto the cytidine present at position 34 of the AUA codon-specific tRNA(Ile) that contains the anticodon CAU, in an ATP-dependent manner. Cytidine is converted to lysidine, thus changing the amino acid specificity of the tRNA from methionine to isoleucine. In Clostridium tetani (strain Massachusetts / E88), this protein is tRNA(Ile)-lysidine synthase.